The chain runs to 456 residues: MFRKFVIMLVLSLLVAAGISQASSASRVCIIGAGYSGLATARYLQDYGLNYTIFEATPNIGGTWRYDPRVGTDEDGIPIYSSNYKNLRVNSPVDLMTYHGYEFQEGTRSFISGNCFYKYMKSFVRHFGLMENIQVRSLVTWVQRTEDKWNLTYMKTDTRKNYTEECDFVVVASGEFSTPKIPHIKGQEEYKGKTMHSHDYKEAESFRGQRVLVIGAGPSGLDVVMQLSNITSKLVHSQHILKSWHIFNQPDFPGNFISKPNVKHFTANGAVFEDDTVEEFDMVIYCTGFYYNHPFLSTLSSGITATENYVMPLYQQVVNINQPTMTFVGICKPFFAKLLDQQAHYSAKLAAGHFKLPSQDKMLRHWLEHVQMLREAQFKITDVNSVGPNVDEYFKALHKEAGVPLLPPVYASVFVFSGKTLLEDLQNYREYDYRIISDTQFKKKYNPREEVCPYDD.

An N-terminal signal peptide occupies residues 1–22; it reads MFRKFVIMLVLSLLVAAGISQA. An FAD-binding site is contributed by 32 to 37; sequence GAGYSG. Position 215-220 (215-220) interacts with NADP(+); sequence GAGPSG.

This sequence belongs to the FMO family. Homotetramer. The cofactor is FAD. In terms of tissue distribution, hemolymph.

The protein resides in the secreted. It carries out the reaction senecionine + NADPH + O2 = senecionine N-oxide + NADP(+) + H2O. Its function is as follows. NADPH-dependent monooxygenase that detoxifies senecionine and similar plant alkaloids that are ingested by the larvae. Is active towards a narrow range of related substrates with highest activity towards senecionine, followed by seneciphylline, retrorsine, monocrotaline, senecivernine, axillarine and axillaridine. The sequence is that of Senecionine N-oxygenase (sno1) from Tyria jacobaeae (Cinnabar moth).